The sequence spans 707 residues: Translation initiation factor eIF2B subunit epsilon (707 aa).

Disordered regions lie at residues 489 to 526 (HDDI…SVKF) and 686 to 707 (AEEE…DESD). The region spanning 516–693 (DNPIEPDSVK…KSAEEESDDS (178 aa)) is the W2 domain. The segment covering 688-707 (EESDDSDDSDDDDDDSDESD) has biased composition (acidic residues).

Belongs to the eIF-2B gamma/epsilon subunits family. As to quaternary structure, component of the translation initiation factor 2B (eIF2B) complex which is a heterodecamer of two sets of five different subunits: alpha, beta, gamma, delta and epsilon. Subunits alpha, beta and delta comprise a regulatory subcomplex and subunits epsilon and gamma comprise a catalytic subcomplex. Within the complex, the hexameric regulatory complex resides at the center, with the two heterodimeric catalytic subcomplexes bound on opposite sides.

The protein localises to the cytoplasm. It localises to the cytosol. In terms of biological role, acts as a component of the translation initiation factor 2B (eIF2B) complex, which catalyzes the exchange of GDP for GTP on eukaryotic initiation factor 2 (eIF2) gamma subunit. Its guanine nucleotide exchange factor activity is repressed when bound to eIF2 complex phosphorylated on the alpha subunit, thereby limiting the amount of methionyl-initiator methionine tRNA available to the ribosome and consequently global translation is repressed. This is Translation initiation factor eIF2B subunit epsilon (eif2b5) from Dictyostelium discoideum (Social amoeba).